Reading from the N-terminus, the 93-residue chain is Putative regulatory protein LBL_1834 (93 aa).

The protein belongs to the RemA family.

The polypeptide is Putative regulatory protein LBL_1834 (Leptospira borgpetersenii serovar Hardjo-bovis (strain L550)).